A 212-amino-acid polypeptide reads, in one-letter code: Fibrillarin-like rRNA/tRNA 2'-O-methyltransferase (212 aa).

Residues 76 to 77 (TT), 94 to 95 (EL), 119 to 120 (DA), and 139 to 142 (DIAQ) contribute to the S-adenosyl-L-methionine site.

Belongs to the methyltransferase superfamily. Fibrillarin family. As to quaternary structure, interacts with nop5. Component of box C/D small ribonucleoprotein (sRNP) particles that contain rpl7ae, FlpA and nop5, plus a guide RNA.

Its function is as follows. Involved in pre-rRNA and tRNA processing. Utilizes the methyl donor S-adenosyl-L-methionine to catalyze the site-specific 2'-hydroxyl methylation of ribose moieties in rRNA and tRNA. Site specificity is provided by a guide RNA that base pairs with the substrate. Methylation occurs at a characteristic distance from the sequence involved in base pairing with the guide RNA. The sequence is that of Fibrillarin-like rRNA/tRNA 2'-O-methyltransferase from Picrophilus torridus (strain ATCC 700027 / DSM 9790 / JCM 10055 / NBRC 100828 / KAW 2/3).